We begin with the raw amino-acid sequence, 173 residues long: Mesencephalic astrocyte-derived neurotrophic factor homolog (173 aa).

Positions 1–22 (MKTWHMVVVIGFLATLAQTSLA) are cleaved as a signal peptide. 4 cysteine pairs are disulfide-bonded: Cys28–Cys114, Cys31–Cys103, Cys61–Cys72, and Cys148–Cys151.

Belongs to the ARMET family.

It localises to the secreted. In terms of biological role, required during the maturation of the embryonic nervous system for maintenance of neuronal and cuticular connectivity. Essential for maintenance of dopaminergic neurons and dopamine levels. This chain is Mesencephalic astrocyte-derived neurotrophic factor homolog, found in Drosophila sechellia (Fruit fly).